The following is a 646-amino-acid chain: Alkyl/aryl-sulfatase BDS1 (646 aa).

The residue at position 1 (methionine 1) is an N-acetylmethionine. Residues histidine 162, histidine 164, aspartate 166, histidine 167, glutamate 273, glutamate 292, and histidine 337 each contribute to the Zn(2+) site.

This sequence belongs to the metallo-beta-lactamase superfamily. Type III sulfatase family. It depends on Zn(2+) as a cofactor.

Functionally, alkyl/aryl-sulfatase. Enables the use of SDS and 4-nitrocatechol as sulfur source. This Saccharomyces cerevisiae (strain ATCC 204508 / S288c) (Baker's yeast) protein is Alkyl/aryl-sulfatase BDS1 (BDS1).